We begin with the raw amino-acid sequence, 1188 residues long: Oxysterol-binding protein homolog 1 (1188 aa).

ANK repeat units lie at residues Val-51–Asn-80, Asn-96–Cys-125, and Thr-196–Lys-225. A PH domain is found at Met-330–Arg-379. At Ser-394 the chain carries Phosphoserine. Disordered stretches follow at residues Ala-415–Asp-546 and Gln-661–Thr-692. Over residues Pro-424–Gln-433 the composition is skewed to polar residues. Low complexity predominate over residues Thr-443 to Asn-462. Acidic residues predominate over residues Asn-463–Glu-473. A phosphoserine mark is found at Ser-490 and Ser-500. The segment covering Pro-514–Gly-529 has biased composition (acidic residues). 3 positions are modified to phosphoserine: Ser-678, Ser-683, and Ser-691. Residues Thr-692 and Thr-694 each carry the phosphothreonine modification. Ser-708 and Ser-712 each carry phosphoserine. An FFAT motif is present at residues Glu-716–Glu-722. The disordered stretch occupies residues Glu-721–Glu-755. An OSBP-related domain (ORD) region spans residues Leu-800 to Asn-1174. Asp-834 and Lys-962 together coordinate ergosterol.

The protein belongs to the OSBP family. Interacts with NVJ1. Interacts with the AAA ATPase AFG2; regulates OSH1 membrane association. AFG2 is required for membrane dissociation of OSH1. Interacts with SCS2.

Its subcellular location is the golgi apparatus membrane. The protein resides in the nucleus outer membrane. It is found in the endoplasmic reticulum membrane. The protein localises to the vacuole membrane. Functionally, lipid transport protein (LTP) involved in non-vesicular transfer of lipids between membranes. Functions in phosphoinositide-coupled directional transport of various lipids by carrying the lipid molecule in a hydrophobic pocket and transferring it between membranes through the cytosol. Involved in maintenance of intracellular sterol distribution and homeostasis. Involved in non-vesicular transport of ergosterol and PI(4)P at the NVJ. Binds sterol and PI4P in a mutually exclusive manner. May be involved in formation of PMN vesicles by altering the membrane lipid composition. The chain is Oxysterol-binding protein homolog 1 from Saccharomyces cerevisiae (strain ATCC 204508 / S288c) (Baker's yeast).